We begin with the raw amino-acid sequence, 331 residues long: UPF0324 membrane protein SACOL0411 (331 aa).

The next 11 helical transmembrane spans lie at 9–26 (FMIG…SFLA), 31–48 (ILDK…AILY), 69–88 (LLRF…DIIG), 93–115 (LLAI…NKLL), 122–144 (ALLL…APIF), 154–176 (SIGI…YAIF), 183–202 (YGAW…LAGG), 217–234 (LGRV…ILIM), 247–269 (ISIP…VTIP), 273–295 (LNIL…GLNV), and 308–330 (LMTI…HWLY).

It belongs to the UPF0324 family.

Its subcellular location is the cell membrane. This is UPF0324 membrane protein SACOL0411 from Staphylococcus aureus (strain COL).